The following is a 457-amino-acid chain: Argininosuccinate lyase (457 aa).

This sequence belongs to the lyase 1 family. Argininosuccinate lyase subfamily.

Its subcellular location is the cytoplasm. The catalysed reaction is 2-(N(omega)-L-arginino)succinate = fumarate + L-arginine. It participates in amino-acid biosynthesis; L-arginine biosynthesis; L-arginine from L-ornithine and carbamoyl phosphate: step 3/3. The chain is Argininosuccinate lyase from Bacillus pumilus (strain SAFR-032).